A 312-amino-acid polypeptide reads, in one-letter code: Dihydroorotate dehydrogenase B (NAD(+)), catalytic subunit (312 aa).

Residues Ser23 and 47–48 contribute to the FMN site; that span reads KA. Residues Lys47 and 71–75 contribute to the substrate site; that span reads NAIGL. Residues Asn103 and Asn131 each coordinate FMN. Asn131 is a binding site for substrate. Catalysis depends on Cys134, which acts as the Nucleophile. Residues Lys171 and Ile197 each contribute to the FMN site. 198 to 199 provides a ligand contact to substrate; the sequence is NT. FMN is bound by residues Gly223, 249–250, and 271–272; these read GG and GT.

The protein belongs to the dihydroorotate dehydrogenase family. Type 1 subfamily. Heterotetramer of 2 PyrK and 2 PyrD type B subunits. It depends on FMN as a cofactor.

The protein localises to the cytoplasm. The catalysed reaction is (S)-dihydroorotate + NAD(+) = orotate + NADH + H(+). It participates in pyrimidine metabolism; UMP biosynthesis via de novo pathway; orotate from (S)-dihydroorotate (NAD(+) route): step 1/1. Its function is as follows. Catalyzes the conversion of dihydroorotate to orotate with NAD(+) as electron acceptor. In Streptococcus pneumoniae serotype 4 (strain ATCC BAA-334 / TIGR4), this protein is Dihydroorotate dehydrogenase B (NAD(+)), catalytic subunit (pyrDB).